We begin with the raw amino-acid sequence, 259 residues long: Thiazole synthase (259 aa).

K99 serves as the catalytic Schiff-base intermediate with DXP. Residues G160, 186-187 (AG), and 208-209 (NT) each bind 1-deoxy-D-xylulose 5-phosphate.

Belongs to the ThiG family. Homotetramer. Forms heterodimers with either ThiH or ThiS.

The protein localises to the cytoplasm. The enzyme catalyses [ThiS sulfur-carrier protein]-C-terminal-Gly-aminoethanethioate + 2-iminoacetate + 1-deoxy-D-xylulose 5-phosphate = [ThiS sulfur-carrier protein]-C-terminal Gly-Gly + 2-[(2R,5Z)-2-carboxy-4-methylthiazol-5(2H)-ylidene]ethyl phosphate + 2 H2O + H(+). It functions in the pathway cofactor biosynthesis; thiamine diphosphate biosynthesis. Functionally, catalyzes the rearrangement of 1-deoxy-D-xylulose 5-phosphate (DXP) to produce the thiazole phosphate moiety of thiamine. Sulfur is provided by the thiocarboxylate moiety of the carrier protein ThiS. In vitro, sulfur can be provided by H(2)S. In Porphyromonas gingivalis (strain ATCC 33277 / DSM 20709 / CIP 103683 / JCM 12257 / NCTC 11834 / 2561), this protein is Thiazole synthase.